The chain runs to 50 residues: Conotoxin Bu13 (50 aa).

Residue Ala-1 is a signal peptide. Positions 2–24 (EDSRGTQLHRALRKTTKLSLSIR) are excised as a propeptide. 3 disulfide bridges follow: Cys-25–Cys-40, Cys-32–Cys-44, and Cys-39–Cys-49.

This sequence belongs to the conotoxin O1 superfamily. In terms of tissue distribution, expressed by the venom duct.

The protein localises to the secreted. The chain is Conotoxin Bu13 from Conus bullatus (Bubble cone).